The primary structure comprises 478 residues: Endoplasmic reticulum oxidoreductin-1 (478 aa).

The N-terminal stretch at 1–20 (MREPLLQLIVLSLIIIVVNT) is a signal peptide. Cystine bridges form between Cys28-Cys41, Cys30-Cys39, Cys79-Cys384, Cys88-Cys93, Cys209-Cys230, and Cys387-Cys390. Residues 117-143 (AAVKEEEDDDAEKCADAGNNIDPMDRT) are disordered. The FAD site is built by Arg188, Thr190, and Trp201. FAD contacts are provided by Ser241, His244, Arg283, and Arg295. A glycan (N-linked (GlcNAc...) asparagine) is linked at Asn377. The segment at 459 to 478 (ESVMNTAADGPPRKSNKIDL) is disordered.

The protein belongs to the EROs family. May function both as a monomer and a homodimer. The cofactor is FAD.

Its subcellular location is the endoplasmic reticulum membrane. Functionally, oxidoreductase involved in disulfide bond formation in the endoplasmic reticulum. Efficiently reoxidizes pdi-1, the enzyme catalyzing protein disulfide formation, in order to allow pdi-1 to sustain additional rounds of disulfide formation. Following pdi reoxidation, passes its electrons to molecular oxygen via FAD, leading to the production of reactive oxygen species (ROS) in the cell. The chain is Endoplasmic reticulum oxidoreductin-1 (ero-1) from Caenorhabditis elegans.